Consider the following 173-residue polypeptide: Protein GrpE (173 aa).

The span at 1–20 shows a compositional bias: basic and acidic residues; the sequence is MQDEFKTDTPRTEAGSEKET. Residues 1-23 form a disordered region; the sequence is MQDEFKTDTPRTEAGSEKETMPS.

This sequence belongs to the GrpE family. Homodimer.

The protein localises to the cytoplasm. Functionally, participates actively in the response to hyperosmotic and heat shock by preventing the aggregation of stress-denatured proteins, in association with DnaK and GrpE. It is the nucleotide exchange factor for DnaK and may function as a thermosensor. Unfolded proteins bind initially to DnaJ; upon interaction with the DnaJ-bound protein, DnaK hydrolyzes its bound ATP, resulting in the formation of a stable complex. GrpE releases ADP from DnaK; ATP binding to DnaK triggers the release of the substrate protein, thus completing the reaction cycle. Several rounds of ATP-dependent interactions between DnaJ, DnaK and GrpE are required for fully efficient folding. The protein is Protein GrpE of Thiobacillus denitrificans (strain ATCC 25259 / T1).